A 677-amino-acid chain; its full sequence is MFTEICGKLRTCIYKKVAFSRPLGCNLRQLPVFRDFHNSVSCLRENDKALDELNATILRLQRRIDASKSISLQQKQTQEFPRNEKLLSFLLDNTLRSNVSDKETHSVPPKSKSVLPSEDNILVQRLGVPETSFNKYFQLEPTAESISHKSVLAPEVWKSRLDNLFRYSVPFEKCNLNQVIELVTHLPSSFRASYAKNILDCLKQVCLTPSVYLLNILLHASAKHSTLEETLNVYNAYNQFQLKPDNYTFVSLIIAYSLHKQIVKAFSLLSEMKRLKIEANTHVFNTYIAILYHERLYEQAWRLFDYMKFKSLQSQPDDKTYSYMISVCTAERKVEKALNLYQEMQERPINPLTPSSRTIDAILRALARYPRYHSKFWSIFEELRAEQWKPGAQTFVAFAQLFSYGGQVNSLKRWISRIWSMSGETPDAKTIELLFQYLFRAYSNVKFNQEPSLEQVPNEKTGDDASISSPSNQLSLKLPFLLSSSSGDITKEELIHEAKECYHYLQQYHPTVLSVHLRTTYMSIFKNHGCMDEVKEFYAKSFRPAKLPSSHVVSNQNETTCNKDLPFRDIHVYACAINGASVSNDFAFGYAVWLEYLHCKSYLPEVLNGDKIEFEITKSMIILFARNQFLHLAVKLLNETKDRHWKWTRRSLGIMHKVAFLSQDKPALDLIEEIVLD.

A mitochondrion-targeting transit peptide spans 1-43 (MFTEICGKLRTCIYKKVAFSRPLGCNLRQLPVFRDFHNSVSCL). PPR repeat units lie at residues 210–244 (SVYLLNILLHASAKHSTLEETLNVYNAYNQFQLKP), 245–279 (DNYTFVSLIIAYSLHKQIVKAFSLLSEMKRLKIEA), 280–314 (NTHVFNTYIAILYHERLYEQAWRLFDYMKFKSLQS), 317–351 (DDKTYSYMISVCTAERKVEKALNLYQEMQERPINP), 355–390 (SSRTIDAILRALARYPRYHSKFWSIFEELRAEQWKP), and 569–604 (DIHVYACAINGASVSNDFAFGYAVWLEYLHCKSYLP).

Belongs to the CCM1 family. As to quaternary structure, binds to mitochondrial small subunit 15S rRNA.

The protein localises to the mitochondrion. Regulates mitochondrial small subunit maturation by controlling 15S rRNA 5'-end processing. Localizes to the 5' precursor of the 15S rRNA in a position that is subsequently occupied by mS47 in the mature yeast mtSSU. Uses structure and sequence-specific RNA recognition, binding to a single-stranded region of the precursor and specifically recognizing bases -6 to -1. The exchange of Ccm1 for mS47 is coupled to the irreversible removal of precursor rRNA that is accompanied by conformational changes of the mitoribosomal proteins uS5m and mS26. These conformational changes signal completion of 5'-end rRNA processing through protection of the mature 5'-end of the 15S rRNA and stabilization of mS47. The removal of the 5' precursor together with the dissociation of Ccm1 may be catalyzed by the 5'-3' exoribonuclease Pet127. Involved in the specific removal of group I introns in mitochondrial encoded transcripts. This chain is Mitochondrial 15S rRNA processing factor ppr3 (dmr1), found in Schizosaccharomyces japonicus (strain yFS275 / FY16936) (Fission yeast).